Reading from the N-terminus, the 216-residue chain is Somatotropin (216 aa).

The first 26 residues, 1-26 (MAAGPRTSMLLAFALLCLPWTQEVGA), serve as a signal peptide directing secretion. H45 provides a ligand contact to Zn(2+). C78 and C189 are oxidised to a cystine. At S131 the chain carries Phosphoserine. Position 198 (E198) interacts with Zn(2+). The cysteines at positions 206 and 214 are disulfide-linked.

It belongs to the somatotropin/prolactin family.

Its subcellular location is the secreted. Functionally, plays an important role in growth control. Its major role in stimulating body growth is to stimulate the liver and other tissues to secrete IGF1. It stimulates both the differentiation and proliferation of myoblasts. It also stimulates amino acid uptake and protein synthesis in muscle and other tissues. In Delphinus delphis (Short-beaked common dolphin), this protein is Somatotropin (GH1).